We begin with the raw amino-acid sequence, 187 residues long: MASTADFKNGLVLQIDGQLWQIVEFQHVKPGKGPAFVRTKLKNVVSGKVVDKTYNAGVKVETATVDRRDATYLYRDGSDFVFMDSEDFEQHPLPEALVGRLAGFLLESMPVQIAFHDGVPLYLELPVTVELLVAHTEPGLQGDRSSAGTKPATMETGAEIQVPLFINTGDKLKVDSRDGSYLGRVNA.

The protein belongs to the elongation factor P family.

The protein resides in the cytoplasm. The protein operates within protein biosynthesis; polypeptide chain elongation. Involved in peptide bond synthesis. Stimulates efficient translation and peptide-bond synthesis on native or reconstituted 70S ribosomes in vitro. Probably functions indirectly by altering the affinity of the ribosome for aminoacyl-tRNA, thus increasing their reactivity as acceptors for peptidyl transferase. The chain is Elongation factor P from Mycolicibacterium gilvum (strain PYR-GCK) (Mycobacterium gilvum (strain PYR-GCK)).